We begin with the raw amino-acid sequence, 358 residues long: Diels-Alderase phmD (358 aa).

Belongs to the Diels-Alderase family.

Its pathway is mycotoxin biosynthesis. In terms of biological role, diels-Alderase; part of the gene cluster that mediates the biosynthesis of the mycotoxins phomacins, leucine-derived cytochalasans with potent actin polymerization-inhibitory activities and monocot-specific antigerminative activities. The first step in the pathway is catalyzed by the hybrid PKS-NRPS phmA, assisted by the enoyl reductase phmE, that are responsible for fusion of the leucine precursor and the polyketide backbone to produce a 2-pyrrolidone intermediate. The polyketide synthase module (PKS) of phmA is responsible for the synthesis of the polyketide backbone and the downstream nonribosomal peptide synthetase (NRPS) amidates the carboxyl end of the polyketide with the leucine precursor. Because phmA lacks a designated enoylreductase (ER) domain, the required activity is provided the enoyl reductase phmE. Reduction by the hydrolyase phmG, followed by dehydration and intra-molecular Diels-Alder cyclization by the Diels-Alderase phmD then yield the required isoindolone-fused macrocycle. A number of oxidative steps catalyzed by the tailoring cytochrome P450 monooxygenase phmB, the FAD-linked oxidoreductase phmC and the short-chain dehydrogenase/reductase phmF, are further required to afford the final products, phomacin D and phomacin E. The sequence is that of Diels-Alderase phmD from Phaeosphaeria nodorum (strain SN15 / ATCC MYA-4574 / FGSC 10173) (Glume blotch fungus).